Here is a 214-residue protein sequence, read N- to C-terminus: ATP-dependent Clp protease proteolytic subunit 3 (214 aa).

Residue Ser106 is the Nucleophile of the active site. The active site involves His131.

This sequence belongs to the peptidase S14 family. As to quaternary structure, fourteen ClpP subunits assemble into 2 heptameric rings which stack back to back to give a disk-like structure with a central cavity, resembling the structure of eukaryotic proteasomes.

It localises to the cytoplasm. The enzyme catalyses Hydrolysis of proteins to small peptides in the presence of ATP and magnesium. alpha-casein is the usual test substrate. In the absence of ATP, only oligopeptides shorter than five residues are hydrolyzed (such as succinyl-Leu-Tyr-|-NHMec, and Leu-Tyr-Leu-|-Tyr-Trp, in which cleavage of the -Tyr-|-Leu- and -Tyr-|-Trp bonds also occurs).. In terms of biological role, cleaves peptides in various proteins in a process that requires ATP hydrolysis. Has a chymotrypsin-like activity. Plays a major role in the degradation of misfolded proteins. The sequence is that of ATP-dependent Clp protease proteolytic subunit 3 from Trichormus variabilis (strain ATCC 29413 / PCC 7937) (Anabaena variabilis).